A 635-amino-acid chain; its full sequence is Glutamine--fructose-6-phosphate aminotransferase [isomerizing] (635 aa).

Cysteine 2 serves as the catalytic Nucleophile; for GATase activity. The 217-residue stretch at 2-218 folds into the Glutamine amidotransferase type-2 domain; the sequence is CGIVGMVAGR…EGDIADVHRD (217 aa). SIS domains are found at residues 299-439 and 472-625; these read FERL…AKKI and CARH…IDQP. The active-site For Fru-6P isomerization activity is the lysine 630.

In terms of assembly, homodimer.

The protein resides in the cytoplasm. The enzyme catalyses D-fructose 6-phosphate + L-glutamine = D-glucosamine 6-phosphate + L-glutamate. Functionally, catalyzes the first step in hexosamine metabolism, converting fructose-6P into glucosamine-6P using glutamine as a nitrogen source. The protein is Glutamine--fructose-6-phosphate aminotransferase [isomerizing] of Treponema pallidum (strain Nichols).